The following is a 217-amino-acid chain: Thiopurine S-methyltransferase (217 aa).

4 residues coordinate S-adenosyl-L-methionine: Trp-11, Leu-46, Glu-67, and Arg-122.

It belongs to the class I-like SAM-binding methyltransferase superfamily. TPMT family.

It localises to the cytoplasm. It catalyses the reaction S-adenosyl-L-methionine + a thiopurine = S-adenosyl-L-homocysteine + a thiopurine S-methylether.. This Vibrio vulnificus (strain YJ016) protein is Thiopurine S-methyltransferase.